The chain runs to 424 residues: O-seryl-dTMP PLP-dependent decarboxylase (424 aa).

It belongs to the pyridoxal-phosphate-dependent aminodecarboxylase family.

It carries out the reaction 5-O-(L-seryl)-dTMP in DNA + H(+) = 5-aminoethoxy-methyl-dUMP in DNA + CO2. Its function is as follows. Converts 5-O-serinylthymidine (O-SerT) into 5-aminoethoxy-2'-deoxymethyluridine (5-NeOmdU) as a step in the pathway leading to thymidine hypermodifications in the viral genome. As a final result of the pathway of hypermodification, 5-NeOmdU substitutes for about 40% of the thymidines in the viral DNA. These modifications probably prevent degradation of viral genome by the host restriction-modification antiviral defense system. This is O-seryl-dTMP PLP-dependent decarboxylase from Salmonella phage ViI.